The following is an 860-amino-acid chain: Valine--tRNA ligase (860 aa).

Positions Pro43 to His53 match the 'HIGH' region motif. The tract at residues Leu469–Gly491 is disordered. The short motif at Lys574–Ser578 is the 'KMSKS' region element. Lys577 contacts ATP.

This sequence belongs to the class-I aminoacyl-tRNA synthetase family. ValS type 2 subfamily. Monomer.

It localises to the cytoplasm. It carries out the reaction tRNA(Val) + L-valine + ATP = L-valyl-tRNA(Val) + AMP + diphosphate. In terms of biological role, catalyzes the attachment of valine to tRNA(Val). As ValRS can inadvertently accommodate and process structurally similar amino acids such as threonine, to avoid such errors, it has a 'posttransfer' editing activity that hydrolyzes mischarged Thr-tRNA(Val) in a tRNA-dependent manner. The chain is Valine--tRNA ligase from Salinispora tropica (strain ATCC BAA-916 / DSM 44818 / JCM 13857 / NBRC 105044 / CNB-440).